The sequence spans 413 residues: Probable tRNA pseudouridine synthase D (413 aa).

Aspartate 97 functions as the Nucleophile in the catalytic mechanism. A TRUD domain is found at 167-370 (AAPNYYGYQR…YGTYRRVRLE (204 aa)).

The protein belongs to the pseudouridine synthase TruD family.

It carries out the reaction uridine(13) in tRNA = pseudouridine(13) in tRNA. Could be responsible for synthesis of pseudouridine from uracil-13 in transfer RNAs. This Pyrobaculum aerophilum (strain ATCC 51768 / DSM 7523 / JCM 9630 / CIP 104966 / NBRC 100827 / IM2) protein is Probable tRNA pseudouridine synthase D.